Consider the following 220-residue polypeptide: Deoxyribose-phosphate aldolase (220 aa).

The active-site Proton donor/acceptor is Asp89. Lys151 acts as the Schiff-base intermediate with acetaldehyde in catalysis. The Proton donor/acceptor role is filled by Lys180.

This sequence belongs to the DeoC/FbaB aldolase family. DeoC type 1 subfamily.

The protein resides in the cytoplasm. The catalysed reaction is 2-deoxy-D-ribose 5-phosphate = D-glyceraldehyde 3-phosphate + acetaldehyde. The protein operates within carbohydrate degradation; 2-deoxy-D-ribose 1-phosphate degradation; D-glyceraldehyde 3-phosphate and acetaldehyde from 2-deoxy-alpha-D-ribose 1-phosphate: step 2/2. In terms of biological role, catalyzes a reversible aldol reaction between acetaldehyde and D-glyceraldehyde 3-phosphate to generate 2-deoxy-D-ribose 5-phosphate. This chain is Deoxyribose-phosphate aldolase, found in Streptococcus gordonii (strain Challis / ATCC 35105 / BCRC 15272 / CH1 / DL1 / V288).